A 332-amino-acid chain; its full sequence is tRNA(Ile)-lysidine synthase (332 aa).

Residue 39–44 (SGGADS) coordinates ATP.

Belongs to the tRNA(Ile)-lysidine synthase family.

Its subcellular location is the cytoplasm. It catalyses the reaction cytidine(34) in tRNA(Ile2) + L-lysine + ATP = lysidine(34) in tRNA(Ile2) + AMP + diphosphate + H(+). Its function is as follows. Ligates lysine onto the cytidine present at position 34 of the AUA codon-specific tRNA(Ile) that contains the anticodon CAU, in an ATP-dependent manner. Cytidine is converted to lysidine, thus changing the amino acid specificity of the tRNA from methionine to isoleucine. The sequence is that of tRNA(Ile)-lysidine synthase from Leifsonia xyli subsp. xyli (strain CTCB07).